Consider the following 388-residue polypeptide: NADH-quinone oxidoreductase subunit D 2 (388 aa).

This sequence belongs to the complex I 49 kDa subunit family. As to quaternary structure, NDH-1 is composed of 14 different subunits. Subunits NuoB, C, D, E, F, and G constitute the peripheral sector of the complex.

The protein resides in the cell inner membrane. The catalysed reaction is a quinone + NADH + 5 H(+)(in) = a quinol + NAD(+) + 4 H(+)(out). In terms of biological role, NDH-1 shuttles electrons from NADH, via FMN and iron-sulfur (Fe-S) centers, to quinones in the respiratory chain. The immediate electron acceptor for the enzyme in this species is believed to be ubiquinone. Couples the redox reaction to proton translocation (for every two electrons transferred, four hydrogen ions are translocated across the cytoplasmic membrane), and thus conserves the redox energy in a proton gradient. The polypeptide is NADH-quinone oxidoreductase subunit D 2 (Sorangium cellulosum (strain So ce56) (Polyangium cellulosum (strain So ce56))).